The chain runs to 466 residues: Argininosuccinate lyase 1 (466 aa).

The protein belongs to the lyase 1 family. Argininosuccinate lyase subfamily.

Its subcellular location is the cytoplasm. It carries out the reaction 2-(N(omega)-L-arginino)succinate = fumarate + L-arginine. It functions in the pathway amino-acid biosynthesis; L-arginine biosynthesis; L-arginine from L-ornithine and carbamoyl phosphate: step 3/3. The polypeptide is Argininosuccinate lyase 1 (Mesorhizobium japonicum (strain LMG 29417 / CECT 9101 / MAFF 303099) (Mesorhizobium loti (strain MAFF 303099))).